Here is a 375-residue protein sequence, read N- to C-terminus: Stimulator of interferon genes protein 2 (375 aa).

The next 4 membrane-spanning stretches (helical) occupy residues 30 to 50 (TATV…LLAV), 60 to 80 (IHFL…GELV), 114 to 134 (AGSI…VLYE), and 144 to 164 (YPIL…LVGL). Residues Tyr195, Arg256, and Arg262 each contribute to the 2',3'-cGAMP site.

It belongs to the STING family.

It is found in the membrane. In terms of biological role, facilitator of innate immune signaling that acts as a sensor of second messenger signals produced by cyclic GMP-AMP synthase-like receptors (cGLRs) and promotes the production of type I interferon. Innate immune response is triggered in response to nucleotides from viruses and bacteria delivered to the cytoplasm. Acts by binding cyclic dinucleotides: recognizes and binds 2'-3' linked cGAMP (2'-3'-cGAMP), a second messengers produced by cGLRs in response to nucleotides in the cytosol, such as double-stranded RNA (dsRNA). Upon binding to 2'-3'-cGAMP, oligomerizes and promotes the recruitment and subsequent activation of the transcription factor IRF3 to induce expression of type I interferon. In Stylophora pistillata (Smooth cauliflower coral), this protein is Stimulator of interferon genes protein 2.